The sequence spans 698 residues: Transcription factor cwo (698 aa).

The segment at 62 to 75 is basic motif; degenerate; it reads QDPLSHRIIEKRRR. In terms of domain architecture, bHLH spans 62-117; that stretch reads QDPLSHRIIEKRRRDRMNSCLADLSRLIPPQYQRKGRGRIEKTEIIEMAIRHLKHL. Residues 76–117 are helix-loop-helix motif; that stretch reads DRMNSCLADLSRLIPPQYQRKGRGRIEKTEIIEMAIRHLKHL. An Orange domain is found at 128–159; the sequence is YRSGYMDCMKEAAKFLYDVHMQDFCHRLLGRL. 2 disordered regions span residues 257-319 and 349-369; these read SSPA…ASST and STAPHHHHHHTDSSHHDFESS. The segment covering 280–318 has biased composition (low complexity); it reads APPAADNVPSNSTGSGSAAACAGGNSNSSGSNSSNAASS. Residues 359–369 are compositionally biased toward basic and acidic residues; it reads TDSSHHDFESS.

In terms of tissue distribution, expressed in adult brain where it is detected in the dorsal lateral neurons, small and large ventral lateral neurons and dorsal neurons 1, 2 and 3 (at protein level). Expressed at constant levels in a 12 hour light / 12 hour day cycle (at protein level). Strongly expressed in pacemaker neurons. In adults, mRNA expression oscillates in a circadian manner with a peak at around 14 hour Zeitgeber time. mRNA levels oscillate in a rhythmic manner in both 12 hour light / 12 hour dark and constant dark conditions with a morning peak around the time of lights-on and an evening peak around the time of lights-off in light/dark conditions. During stage 8 of embryonic development, expressed in the anterior and posterior midgut primordia and expression in the gut continues throughout embryonic development. During germ band retraction, expression is initiated in many tissues in a prominent segmentally repeated pattern. Later, expression is ubiquitous but has higher levels in segmentally repeated clusters of cells. Expression is also found in cells of the amnioserosa, in the head region, in posterior spiracles and in tracheal trees.

It localises to the nucleus. In terms of biological role, plays a role in the regulation of circadian rhythms. Transcriptional repressor which inhibits Clock-mediated transcriptional activation by binding to E boxes in the promoters of Clock target genes and repressing their transcription. E box binding activity is time-dependent with higher binding activity seen in the early morning (zeitgeber time 2) than early evening (zeitgeber time 14) and is dependent on the presence of the circadian protein per. It is likely that per binds to Clock-cycle heterodimers, reducing their affinity for E box binding and allowing cwo to bind instead. Negatively regulates its own expression. This chain is Transcription factor cwo, found in Drosophila melanogaster (Fruit fly).